The following is a 263-amino-acid chain: 4-hydroxy-tetrahydrodipicolinate reductase (263 aa).

Residues G7 to M12, G96 to T98, and A122 to F125 each bind NAD(+). Catalysis depends on H152, which acts as the Proton donor/acceptor. Residue H153 participates in (S)-2,3,4,5-tetrahydrodipicolinate binding. K156 functions as the Proton donor in the catalytic mechanism. G162–T163 lines the (S)-2,3,4,5-tetrahydrodipicolinate pocket.

It belongs to the DapB family.

Its subcellular location is the cytoplasm. The catalysed reaction is (S)-2,3,4,5-tetrahydrodipicolinate + NAD(+) + H2O = (2S,4S)-4-hydroxy-2,3,4,5-tetrahydrodipicolinate + NADH + H(+). The enzyme catalyses (S)-2,3,4,5-tetrahydrodipicolinate + NADP(+) + H2O = (2S,4S)-4-hydroxy-2,3,4,5-tetrahydrodipicolinate + NADPH + H(+). The protein operates within amino-acid biosynthesis; L-lysine biosynthesis via DAP pathway; (S)-tetrahydrodipicolinate from L-aspartate: step 4/4. In terms of biological role, catalyzes the conversion of 4-hydroxy-tetrahydrodipicolinate (HTPA) to tetrahydrodipicolinate. The chain is 4-hydroxy-tetrahydrodipicolinate reductase from Listeria monocytogenes serotype 4b (strain CLIP80459).